Here is a 189-residue protein sequence, read N- to C-terminus: GTP cyclohydrolase 1 (189 aa).

Zn(2+) is bound by residues C79, H82, and C151.

Belongs to the GTP cyclohydrolase I family. As to quaternary structure, toroid-shaped homodecamer, composed of two pentamers of five dimers.

The catalysed reaction is GTP + H2O = 7,8-dihydroneopterin 3'-triphosphate + formate + H(+). It participates in cofactor biosynthesis; 7,8-dihydroneopterin triphosphate biosynthesis; 7,8-dihydroneopterin triphosphate from GTP: step 1/1. This Lactiplantibacillus plantarum (strain ATCC BAA-793 / NCIMB 8826 / WCFS1) (Lactobacillus plantarum) protein is GTP cyclohydrolase 1.